The primary structure comprises 178 residues: Caveolin-1 (178 aa).

S2 is subject to N-acetylserine. A Phosphoserine modification is found at S2. A required for homooligomerization region spans residues 2-94 (SGGKYVDSEG…WKASFTTFTV (93 aa)). Residues 2-104 (SGGKYVDSEG…TKYWFYRLLS (103 aa)) are Cytoplasmic-facing. K5 is subject to N6-acetyllysine; alternate. Residue K5 forms a Glycyl lysine isopeptide (Lys-Gly) (interchain with G-Cter in ubiquitin); alternate linkage. Position 6 is a phosphotyrosine (Y6). S9 is modified (phosphoserine). Residue Y14 is modified to Phosphotyrosine; by ABL1 and INSR. Phosphotyrosine is present on Y25. Residues K26, K30, K39, K47, and K57 each participate in a glycyl lysine isopeptide (Lys-Gly) (interchain with G-Cter in ubiquitin) cross-link. The tract at residues 82 to 94 (DGIWKASFTTFTV) is interaction with CAVIN3. Positions 105 to 125 (TIFGIPMALIWGIYFAILSFL) form an intramembrane region, helical. The Cytoplasmic segment spans residues 126–178 (HIWAVVPCIKSFLIEIQCISRVYSIYVHTFCDPLFEAIGKIFSNIRISTQKEI). Residues 131–142 (VPCIKSFLIEIQ) form an interacts with SPRY1, SPRY2, SPRY3 and SPRY4 region. 3 S-palmitoyl cysteine lipidation sites follow: C133, C143, and C156. Positions 149-160 (SIYVHTFCDPLF) are interacts with SPRY1, SPRY2, and SPRY4. The interacts with SPRY1, SPRY2, SPRY3 and SPRY4 stretch occupies residues 167-178 (FSNIRISTQKEI).

This sequence belongs to the caveolin family. In terms of assembly, homooligomer. Interacts (via the N-terminus) with DPP4; the interaction is direct. Forms a stable heterooligomeric complex with CAV2 that targets to lipid rafts and drives caveolae formation. Interacts with BMX, BTK, CTNNB1, CDH1, GLIPR2, JUP, NOSTRIN, SNAP25 and STX1A. Interacts with SLC7A9. Interacts with TGFBR1. Interacts with CTNNB1, CDH1 and JUP. Interacts with PACSIN2; this interaction induces membrane tubulation. Interacts with CAVIN3 (via leucine-zipper domain) in a cholesterol-sensitive manner. Interacts with EHD2 in a cholesterol-dependent manner. Interacts with CAVIN1. Forms a ternary complex with UBXN6 and VCP; mediates CAV1 targeting to lysosomes for degradation. Interacts with ABCG1; this interaction regulates ABCG1-mediated cholesterol efflux. Interacts with NEU3; this interaction enhances NEU3 sialidase activity within caveola. Interacts (via C-terminus) with SPRY1, SPRY2 (via C-terminus), SPRY3, and SPRY4. Interacts with IGFBP5; this interaction allows trafficking of IGFBP5 from the plasma membrane to the nucleus. In terms of processing, the N-terminus of both isoforms are blocked. Post-translationally, phosphorylated at Tyr-14 by ABL1 in response to oxidative stress. Ubiquitinated. Undergo monoubiquitination and multi- and/or polyubiquitination. Monoubiquitination of N-terminal lysines promotes integration in a ternary complex with UBXN6 and VCP which promotes oligomeric CAV1 targeting to lysosomes for degradation. Ubiquitinated by ZNRF1; leading to degradation and modulation of the TLR4-mediated immune response. As to expression, adipose tissue, lung, heart, skeletal muscle, stomach, small bowel, kidney, spleen and testis (at protein level).

It localises to the golgi apparatus membrane. It is found in the cell membrane. The protein resides in the membrane. The protein localises to the caveola. Its subcellular location is the membrane raft. It localises to the golgi apparatus. It is found in the trans-Golgi network. In terms of biological role, may act as a scaffolding protein within caveolar membranes. Forms a stable heterooligomeric complex with CAV2 that targets to lipid rafts and drives caveolae formation. Mediates the recruitment of CAVIN proteins (CAVIN1/2/3/4) to the caveolae. Interacts directly with G-protein alpha subunits and can functionally regulate their activity. Involved in the costimulatory signal essential for T-cell receptor (TCR)-mediated T-cell activation. Its binding to DPP4 induces T-cell proliferation and NF-kappa-B activation in a T-cell receptor/CD3-dependent manner. Recruits CTNNB1 to caveolar membranes and may regulate CTNNB1-mediated signaling through the Wnt pathway. Negatively regulates TGFB1-mediated activation of SMAD2/3 by mediating the internalization of TGFBR1 from membrane rafts leading to its subsequent degradation. Binds 20(S)-hydroxycholesterol (20(S)-OHC). The sequence is that of Caveolin-1 (Cav1) from Mus musculus (Mouse).